The following is a 306-amino-acid chain: Homoserine kinase (306 aa).

84–94 (PAGLGLGSSGA) provides a ligand contact to ATP.

Belongs to the GHMP kinase family. Homoserine kinase subfamily.

The protein localises to the cytoplasm. The enzyme catalyses L-homoserine + ATP = O-phospho-L-homoserine + ADP + H(+). It participates in amino-acid biosynthesis; L-threonine biosynthesis; L-threonine from L-aspartate: step 4/5. Catalyzes the ATP-dependent phosphorylation of L-homoserine to L-homoserine phosphate. The sequence is that of Homoserine kinase from Sulfolobus acidocaldarius (strain ATCC 33909 / DSM 639 / JCM 8929 / NBRC 15157 / NCIMB 11770).